The primary structure comprises 363 residues: Probable cinnamyl alcohol dehydrogenase 6 (363 aa).

Cysteine 51 is a Zn(2+) binding site. Serine 53 serves as a coordination point for NADP(+). Zn(2+)-binding residues include histidine 73, glutamate 74, cysteine 104, cysteine 107, cysteine 110, cysteine 118, and cysteine 167. NADP(+)-binding positions include serine 171, 192–197 (GLGGLG), 215–220 (SSTTGK), threonine 255, glycine 279, and 302–304 (SGI).

This sequence belongs to the zinc-containing alcohol dehydrogenase family. Homodimer. The cofactor is Zn(2+). As to expression, expressed in the primary and lateral roots, and root caps. Expressed in the hypocotyl, cotyledon veins and hydathodes. In stems, expressed in the vascular cambium, interfascicular cambium and developing xylem. Expressed in the style, anthers, stamen filaments, vascular tissues of sepals, stigmatic regions in flowers, and abscission and style regions of siliques.

It catalyses the reaction (E)-cinnamyl alcohol + NADP(+) = (E)-cinnamaldehyde + NADPH + H(+). The enzyme catalyses (E)-coniferol + NADP(+) = (E)-coniferaldehyde + NADPH + H(+). The catalysed reaction is (E)-sinapyl alcohol + NADP(+) = (E)-sinapaldehyde + NADPH + H(+). It carries out the reaction (E)-4-coumaroyl alcohol + NADP(+) = (E)-4-coumaraldehyde + NADPH + H(+). It catalyses the reaction (E)-caffeyl alcohol + NADP(+) = (E)-caffeyl aldehyde + NADPH + H(+). It functions in the pathway aromatic compound metabolism; phenylpropanoid biosynthesis. Functionally, involved in lignin biosynthesis. Catalyzes the final step specific for the production of lignin monomers. Catalyzes the NADPH-dependent reduction of coniferaldehyde, 5-hydroxyconiferaldehyde, sinapaldehyde, 4-coumaraldehyde and caffeyl aldehyde to their respective alcohols. The polypeptide is Probable cinnamyl alcohol dehydrogenase 6 (CAD6) (Arabidopsis thaliana (Mouse-ear cress)).